The following is a 66-amino-acid chain: Alpha-actitoxin-Ms11a-1 (66 aa).

An N-terminal signal peptide occupies residues 1–24 (MASKIFFVLAVFLVMSAVLPESFA). 3 disulfide bridges follow: cysteine 26–cysteine 41, cysteine 33–cysteine 46, and cysteine 40–cysteine 61.

It is found in the secreted. The protein localises to the nematocyst. Alpha-toxins act on postsynaptic membranes, they bind to the nicotinic acetylcholine receptors (nAChR) and thus inhibit them. This toxin competes with alpha-bungarotoxin for binding to orthosteric sites on muscle-type T.carlifornicus (IC(50)=408 nM) and human alpha-7/CHRNA7 nAChRs (IC(50)=14.16 uM). The polypeptide is Alpha-actitoxin-Ms11a-1 (Metridium senile (Brown sea anemone)).